The primary structure comprises 82 residues: Acyl carrier protein (82 aa).

The region spanning serine 3–glutamine 81 is the Carrier domain. Residue serine 41 is modified to O-(pantetheine 4'-phosphoryl)serine.

This sequence belongs to the acyl carrier protein (ACP) family. In terms of processing, 4'-phosphopantetheine is transferred from CoA to a specific serine of apo-ACP by AcpS. This modification is essential for activity because fatty acids are bound in thioester linkage to the sulfhydryl of the prosthetic group.

The protein resides in the cytoplasm. Its pathway is lipid metabolism; fatty acid biosynthesis. Its function is as follows. Carrier of the growing fatty acid chain in fatty acid biosynthesis. The protein is Acyl carrier protein of Beutenbergia cavernae (strain ATCC BAA-8 / DSM 12333 / CCUG 43141 / JCM 11478 / NBRC 16432 / NCIMB 13614 / HKI 0122).